The primary structure comprises 973 residues: Nuclear factor NF-kappa-B p105 subunit (973 aa).

Residues 38–245 enclose the RHD domain; sequence ADGPYLQILE…DAIYDSKAPN (208 aa). Cys60 bears the S-nitrosocysteine; alternate mark. A lipid anchor (S-(15-deoxy-Delta12,14-prostaglandin J2-9-yl)cysteine; alternate) is attached at Cys60. Residue Lys324 forms a Glycyl lysine isopeptide (Lys-Gly) (interchain with G-Cter in SUMO2) linkage. Ser336 carries the post-translational modification Phosphoserine. A Nuclear localization signal motif is present at residues 359 to 364; it reads QRKRQK. Residues 371-394 are GRR; sequence DSFGGGSGAGAGGGGMFGSGGGGG. The segment at 434-467 is disordered; it reads TINTKFKNEPRDCAKSDDREILNPPEKETQGEGP. The tract at residues 435–973 is interaction with CFLAR; sequence INTKFKNEPR…GQDGPIEGKI (539 aa). Residues 439 to 463 are compositionally biased toward basic and acidic residues; that stretch reads FKNEPRDCAKSDDREILNPPEKETQ. Residue Lys440 is modified to N6-acetyllysine. Ser449 carries the post-translational modification Phosphoserine. 6 ANK repeats span residues 540–570, 579–608, 612–641, 648–677, 682–711, and 716–745; these read NGDSVLHLAIIHLHAQLVRDLLEVTSGSISD, LYQTPLHLAVITKQEDVVEDLLRVGADLSL, WGNSVLHLAAKEGHDKILGVLLKNSKAALL, EGLNAIHIAVMSNSLSCLQLLVAAGAEVNA, SGRTALHLAVEYDNISLAGCLLLEGDALVD, and DGTTPLHIAAGRGSTRLAALLKAAGADPLV. Residues 648–682 form an essential for interaction with HIF1AN region; it reads EGLNAIHIAVMSNSLSCLQLLVAAGAEVNAQEQKS. A (3S)-3-hydroxyasparagine; by HIF1AN modification is found at Asn676. Phosphoserine is present on Ser757. One copy of the ANK 7 repeat lies at 769-799; it reads PGTTPLDMAANWQVFDILNGKPYEPVFTSDD. A Death domain is found at 803 to 890; it reads QGDIKQLTED…EAIEVIQAAF (88 aa). The residue at position 898 (Ser898) is a Phosphoserine. Ser912 is subject to Phosphoserine; by GSK3-beta; in vitro. Ser928 carries the post-translational modification Phosphoserine. 2 positions are modified to phosphoserine; by IKKB: Ser932 and Ser937. Position 942 is a phosphoserine (Ser942). Thr948 carries the post-translational modification Phosphothreonine.

As to quaternary structure, component of the NF-kappa-B p65-p50 complex. Homodimer; component of the NF-kappa-B p50-p50 complex. Component of the NF-kappa-B p105-p50 complex. Component of the NF-kappa-B p50-c-Rel complex. Component of a complex consisting of the NF-kappa-B p50-p50 homodimer and BCL3. Also interacts with MAP3K8. NF-kappa-B p50 subunit interacts with NCOA3 coactivator, which may coactivate NF-kappa-B dependent expression via its histone acetyltransferase activity. Interacts with TSC22D3; this interaction prevents nuclear translocation and DNA-binding. Interacts with SPAG9 and UNC5CL. NFKB1/p105 interacts with CFLAR; the interaction inhibits p105 processing into p50. NFKB1/p105 forms a ternary complex with MAP3K8 and TNIP2. Interacts with GSK3B; the interaction prevents processing of p105 to p50. NFKB1/p50 interacts with NFKBIE. NFKB1/p50 interacts with NFKBIZ. Nuclear factor NF-kappa-B p50 subunit interacts with NFKBID. Directly interacts with MEN1. Interacts with HIF1AN. Interacts with FEM1A; interaction is direct. Post-translationally, generation of the NF-kappa-B p50 (Nuclear factor NF-kappa-B p50 subunit) transcription factor takes place both cotranslationally and post-translationally via non-mutually exclusive mechanisms. A cotranslational processing allows the production of both p50 and p105 (Nuclear factor NF-kappa-B p105 subunit) from a single NFKB1 mRNA. While translation occurs, the particular unfolded structure after the GRR repeat region acts as a substrate for the proteasome, promoting degradation of the C-terminus. The GRR acts as a proteasomal 'stop signal', protecting the region upstream of the GRR from degradation and promoting generation of p50. It is unclear if limited proteasome degradation during cotranslational processing depends on ubiquitination. NF-kappa-B p50 is also generated post-translationally following ubiquitination by the KPC complex, leading to limited processing by the proteasome downstream of the GRR region, thereby generating p50. In terms of processing, phosphorylation at the C-terminus by IKBKB/IKKB acts as a signal for ubiquitination and promotes either complete degradation or processing to generate the NF-kappa-B p50 (Nuclear factor NF-kappa-B p50 subunit). Phosphorylation at Ser-912 primes p105 for proteolytic processing in response to TNF-alpha stimulation. Phosphorylation at Ser-928, Ser-932 and Ser-937 are required for BTRC/BTRCP-mediated ubiquitination and proteolysis. Phosphorylation at Ser-932 is also required for ubiquitination by the KPC complex and limited processing to generate NF-kappa-B p50 (Nuclear factor NF-kappa-B p50 subunit). Polyubiquitinated at multiple Lys residues in the C-terminus. Polyubiquitinated by the SCF(FBXW11) and SCF(BTRC) complexes following phosphorylation at Ser-928, Ser-932 and Ser-937, leading to its complete degradation. In contrast, polyubiquitination by the KPC complex following phosphorylation at Ser-932 leads to limited proteosomal processing and generation of the active NF-kappa-B p50 (Nuclear factor NF-kappa-B p50 subunit). Post-translationally, S-nitrosylation of Cys-60 affects DNA binding. In terms of processing, the covalent modification of cysteine by 15-deoxy-Delta12,14-prostaglandin-J2 is autocatalytic and reversible. It may occur as an alternative to other cysteine modifications, such as S-nitrosylation and S-palmitoylation.

It is found in the cytoplasm. Its subcellular location is the nucleus. In terms of biological role, NF-kappa-B is a pleiotropic transcription factor present in almost all cell types and is the endpoint of a series of signal transduction events that are initiated by a vast array of stimuli related to many biological processes such as inflammation, immunity, differentiation, cell growth, tumorigenesis and apoptosis. NF-kappa-B is a homo- or heterodimeric complex formed by the Rel-like domain-containing proteins RELA/p65, RELB, NFKB1/p105, NFKB1/p50, REL and NFKB2/p52 and the heterodimeric p65-p50 complex appears to be most abundant one. The dimers bind at kappa-B sites in the DNA of their target genes and the individual dimers have distinct preferences for different kappa-B sites that they can bind with distinguishable affinity and specificity. Different dimer combinations act as transcriptional activators or repressors, respectively. NF-kappa-B is controlled by various mechanisms of post-translational modification and subcellular compartmentalization as well as by interactions with other cofactors or corepressors. NF-kappa-B complexes are held in the cytoplasm in an inactive state complexed with members of the NF-kappa-B inhibitor (I-kappa-B) family. In a conventional activation pathway, I-kappa-B is phosphorylated by I-kappa-B kinases (IKKs) in response to different activators, subsequently degraded thus liberating the active NF-kappa-B complex which translocates to the nucleus. NF-kappa-B heterodimeric p65-p50 and RelB-p50 complexes are transcriptional activators. The NF-kappa-B p50-p50 homodimer is a transcriptional repressor, but can act as a transcriptional activator when associated with BCL3. NFKB1 appears to have dual functions such as cytoplasmic retention of attached NF-kappa-B proteins by p105 and generation of p50 by a cotranslational processing. The proteasome-mediated process ensures the production of both p50 and p105 and preserves their independent function, although processing of NFKB1/p105 also appears to occur post-translationally. p50 binds to the kappa-B consensus sequence 5'-GGRNNYYCC-3', located in the enhancer region of genes involved in immune response and acute phase reactions. In a complex with MAP3K8, NFKB1/p105 represses MAP3K8-induced MAPK signaling; active MAP3K8 is released by proteasome-dependent degradation of NFKB1/p105. Its function is as follows. P105 is the precursor of the active p50 subunit (Nuclear factor NF-kappa-B p50 subunit) of the nuclear factor NF-kappa-B. Acts as a cytoplasmic retention of attached NF-kappa-B proteins by p105. Constitutes the active form, which associates with RELA/p65 to form the NF-kappa-B p65-p50 complex to form a transcription factor. Together with RELA/p65, binds to the kappa-B consensus sequence 5'-GGRNNYYCC-3', located in the enhancer region of genes involved in immune response and acute phase reactions. The polypeptide is Nuclear factor NF-kappa-B p105 subunit (Nfkb1) (Rattus norvegicus (Rat)).